Reading from the N-terminus, the 521-residue chain is MSELAAVLTRSMQASAGDLMVLDRETSLWCRHPWPEVHGLAESVAAWLLDHDRPAAVGLVGEPTVELVAAIQGAWLAGAAVSILPGPVRGANDQRWADATLTRFLGIGVRTVLSQGSYLARLRSVDTAGVTIGDLSTAAHTNRSATPVASEGPAVLQGTAGSTGAPRTAILSPGAVLSNLRGLNQRVGTDAATDVGCSWLPLYHDMGLAFVLSAALAGAPLWLAPTTAFTASPFRWLSWLSDSGATMTAAPNFAYNLIGKYARRVSEVDLGALRVTLNGGEPVDCDGLTRFAEAMAPFGFDAGAVLPSYGLAESTCAVTVPVPGIGLLADRVIDGSGAHKHAVLGNPIPGMEVRISCGDQAAGNASREIGEIEIRGASMMAGYLGQQPIDPDDWFATGDLGYLGAGGLVVCGRAKEVISIAGRNIFPTEVELVAAQVRGVREGAVVALGTGDRSTRPGLVVAAEFRGPDEANARAELIQRVASECGIVPSDVVFVSPGSLPRTSSGKLRRLAVRRSLEMAD.

It belongs to the ATP-dependent AMP-binding enzyme family.

The catalysed reaction is a long-chain fatty acid + holo-[ACP] + ATP = a long-chain fatty acyl-[ACP] + AMP + diphosphate. It catalyses the reaction a medium-chain fatty acid + holo-[ACP] + ATP = a medium-chain fatty acyl-[ACP] + AMP + diphosphate. It functions in the pathway siderophore biosynthesis; mycobactin biosynthesis. Activates lipidic moieties required for mycobactin biosynthesis. Converts medium- to long-chain aliphatic fatty acids into acyl adenylate, which is further transferred on to the phosphopantetheine arm of the carrier protein MbtL. The sequence is that of Medium/long-chain-fatty-acid--[acyl-carrier-protein] ligase MbtM (mbtM) from Mycobacterium bovis (strain ATCC BAA-935 / AF2122/97).